The primary structure comprises 539 residues: Probable transcription factor GLK2 (539 aa).

Positions 86–218 (FASSPDDEPP…NSHGKRKVKV (133 aa)) are disordered. 2 stretches are compositionally biased toward low complexity: residues 99-111 (SAPGPGEPAAAAG) and 121-130 (AAAAAAAAAA). The span at 144–161 (KKDDEERSSSLPEEKDAK) shows a compositional bias: basic and acidic residues. The HTH myb-type domain maps to 212 to 271 (GKRKVKVDWTPELHRRFVQAVEQLGIDKAVPSRILELMGIECLTRHNIASHLQKYRSHRK). A DNA-binding region (H-T-H motif) is located at residues 242–267 (PSRILELMGIECLTRHNIASHLQKYR).

In terms of tissue distribution, expressed in leaves.

It is found in the nucleus. In terms of biological role, probable transcriptional activator that promotes chloroplast development. Acts as an activator of nuclear photosynthetic genes involved in chlorophyll biosynthesis, light harvesting, and electron transport. This is Probable transcription factor GLK2 (GLK2) from Oryza sativa subsp. japonica (Rice).